Consider the following 135-residue polypeptide: Galectin-1 (135 aa).

At Ala-2 the chain carries N-acetylalanine. One can recognise a Galectin domain in the interval 4–135 (GLVASNLNLK…DFKIKCVAFD (132 aa)). N6-acetyllysine occurs at positions 13 and 29. Position 30 is a phosphoserine; by FAM20C (Ser-30). A beta-D-galactoside is bound by residues 45–49 (HFNPR), His-53, Asn-62, and 69–72 (WGTE). Lys-108 carries the N6-acetyllysine; alternate modification. At Lys-108 the chain carries N6-succinyllysine; alternate. An N6-acetyllysine modification is found at Lys-128.

As to quaternary structure, homodimer. Binds LGALS3BP. Interacts with CD2, CD3, CD4, CD6, CD7, CD43, ALCAM and CD45. Interacts with laminin (via poly-N-acetyllactosamine). Interacts with SUSD2. Interacts with cargo receptor TMED10; the interaction mediates the translocation from the cytoplasm into the ERGIC (endoplasmic reticulum-Golgi intermediate compartment) and thereby secretion. Interacts with CD69. As to expression, expressed in placenta, maternal decidua and fetal membranes. Within placenta, expressed in trophoblasts, stromal cells, villous endothelium, syncytiotrophoblast apical membrane and villous stroma. Within fetal membranes, expressed in amnion, chorioamniotic mesenchyma and chorion (at protein level). Expressed in cardiac, smooth, and skeletal muscle, neurons, thymus, kidney and hematopoietic cells.

It localises to the secreted. The protein localises to the extracellular space. The protein resides in the extracellular matrix. It is found in the cytoplasm. In terms of biological role, lectin that binds beta-galactoside and a wide array of complex carbohydrates. Plays a role in regulating apoptosis, cell proliferation and cell differentiation. Inhibits CD45 protein phosphatase activity and therefore the dephosphorylation of Lyn kinase. Strong inducer of T-cell apoptosis. Plays a negative role in Th17 cell differentiation via activation of the receptor CD69. In Homo sapiens (Human), this protein is Galectin-1.